A 463-amino-acid polypeptide reads, in one-letter code: Regulator of microtubule dynamics protein 3 (463 aa).

The Mitochondrial intermembrane segment spans residues 1 to 4; sequence MSKL. A helical transmembrane segment spans residues 5 to 27; the sequence is ILSYRIGLGLVVGAAAGAVIYIV. Residues 28-463 lie on the Cytoplasmic side of the membrane; it reads FRRNRKKTRK…PATAEEELLV (436 aa). The short motif at 146 to 161 is the FFAT element; sequence IYFTATSGAAHTDAES. Residues 153 to 192 form a disordered region; it reads GAAHTDAESEGGYSTAYAESDFERESSRASEAEEEDEVSC. Residues 173-183 are compositionally biased toward basic and acidic residues; that stretch reads DFERESSRASE. The stretch at 279–302 forms a coiled coil; that stretch reads AEDAQEKKSFASEGKEEAEAALQK.

It belongs to the RMDN family. As to quaternary structure, interacts with PTPN2. Interacts with microtubules. Interacts with VAPB. Interacts (FFAT motif) with MOSPD2 (via MSP domain).

The protein resides in the mitochondrion outer membrane. Its subcellular location is the cytoplasm. The protein localises to the nucleus. It is found in the cytoskeleton. It localises to the spindle. The protein resides in the spindle pole. Involved in cellular calcium homeostasis regulation. The protein is Regulator of microtubule dynamics protein 3 (rmdn3) of Xenopus laevis (African clawed frog).